The primary structure comprises 117 residues: Large ribosomal subunit protein bL20 (117 aa).

The protein belongs to the bacterial ribosomal protein bL20 family.

Binds directly to 23S ribosomal RNA and is necessary for the in vitro assembly process of the 50S ribosomal subunit. It is not involved in the protein synthesizing functions of that subunit. The chain is Large ribosomal subunit protein bL20 from Geobacter metallireducens (strain ATCC 53774 / DSM 7210 / GS-15).